The following is a 460-amino-acid chain: Serine--tRNA ligase (460 aa).

Position 255-257 (255-257 (TAE)) interacts with L-serine. ATP contacts are provided by residues 286–288 (RKE) and valine 302. L-serine is bound at residue glutamate 309. 373–376 (EMVS) is a binding site for ATP. Threonine 409 lines the L-serine pocket.

It belongs to the class-II aminoacyl-tRNA synthetase family. Type-1 seryl-tRNA synthetase subfamily. Homodimer. The tRNA molecule binds across the dimer.

Its subcellular location is the cytoplasm. It catalyses the reaction tRNA(Ser) + L-serine + ATP = L-seryl-tRNA(Ser) + AMP + diphosphate + H(+). The catalysed reaction is tRNA(Sec) + L-serine + ATP = L-seryl-tRNA(Sec) + AMP + diphosphate + H(+). It participates in aminoacyl-tRNA biosynthesis; selenocysteinyl-tRNA(Sec) biosynthesis; L-seryl-tRNA(Sec) from L-serine and tRNA(Sec): step 1/1. Its function is as follows. Catalyzes the attachment of serine to tRNA(Ser). Is also able to aminoacylate tRNA(Sec) with serine, to form the misacylated tRNA L-seryl-tRNA(Sec), which will be further converted into selenocysteinyl-tRNA(Sec). This chain is Serine--tRNA ligase, found in Hyperthermus butylicus (strain DSM 5456 / JCM 9403 / PLM1-5).